The following is a 366-amino-acid chain: Inhibin alpha chain (366 aa).

A signal peptide spans 1–20; it reads MVIQPSLLLLLLLTLQDVDS. Residues 21-63 constitute a propeptide that is removed on maturation; it reads CQGPELVRELVLAKVKALFLDALGPPAMDGEGGGPGIRRLPRR. A propeptide spans 64–233 (inhibin alpha N-terminal region); the sequence is HALGGFMHRT…APSAGERARR (170 aa). N-linked (GlcNAc...) asparagine glycosylation is found at Asn-147 and Asn-269. 3 disulfides stabilise this stretch: Cys-263–Cys-328, Cys-292–Cys-363, and Cys-296–Cys-365.

Belongs to the TGF-beta family. Dimeric, linked by one or more disulfide bonds. Activin B is a dimer of alpha and beta-B. Inhibin A is a dimer of alpha and beta-A. Inhibin B is a dimer of alpha and beta-B. Interacts with TGFBR3L; this interaction regulates female fertility. Proteolytic processing yields a number of bioactive forms, consisting either solely of the mature alpha chain, of the most N-terminal propeptide linked through a disulfide bond to the mature alpha chain, or of the entire proprotein. Mainly expressed in ovary and testis. Alpha- and beta-B-subunits are the predominant forms found in testis. Also found in placenta, pituitary, adrenal gland, bone marrow, kidney, spinal cord and brain.

Its subcellular location is the secreted. Its function is as follows. Inhibins and activins inhibit and activate, respectively, the secretion of follitropin by the pituitary gland. Inhibins/activins are involved in regulating a number of diverse functions such as hypothalamic and pituitary hormone secretion, gonadal hormone secretion, germ cell development and maturation, erythroid differentiation, insulin secretion, nerve cell survival, embryonic axial development or bone growth, depending on their subunit composition. Inhibins appear to oppose the functions of activins. Functionally, inhibin A is a dimer of alpha/INHA and beta-A/INHBA that functions as a feedback regulator in the hypothalamic-pituitary-gonadal (HPG) axis. Inhibits the secretion of FSH from the anterior pituitary gland by acting on pituitary gonadotrope cells. Antagonizes activin A by binding to the proteoglycan, betaglycan, and forming a stable complex with and, thereby, sequestering type II activin receptors while excluding type I receptor. In terms of biological role, inhibin B is a dimer of alpha and beta-B that plays a crucial role in the regulation of the reproductive system by inhibiting the secretion of follicle-stimulating hormone (FSH) from the anterior pituitary gland. Thereby, maintains reproductive homeostasis in both males and females. Acts as a more potent suppressor of FSH release than inhibin A. Functions as competitive receptor antagonist binding activin type II receptors with high affinity in the presence of the TGF-beta type III coreceptor/TGFBR3L. In Rattus norvegicus (Rat), this protein is Inhibin alpha chain (Inha).